We begin with the raw amino-acid sequence, 407 residues long: MAYQEPNKDGFYGKFGGRFVPETLMTAVLELEKAYRESQADPSFQEELNQLLRQYVGRETPLYYAKNLTQHIGGAKIYLKREDLNHTGAHKINNALGQVWLAKRMGKKKIIAETGAGQHGVATATAAALFNMECTIYMGEEDVKRQALNVFRMELLGAKVEAVTDGSRVLKDAVNAALRSWVANIDDTHYILGSALGPHPFPEIVRDFQSVIGREAKQQYRDMTGQDLPDALVACVGGGSNAIGLFHPFVEDESVAMYGTEAAGLGVDTEHHAATLTKGRPGVLHGSLMDVLQDAHGQILEAFSISAGLDYPGIGPEHSHYHDIKRASYVPVTDEEALEGFQLLSRVEGIIPALESSHAIAFAVKLAKELGPEKSMIVCLSGRGDKDVVQVKDRLEADAAKKGEAHA.

Position 91 is an N6-(pyridoxal phosphate)lysine (Lys-91).

The protein belongs to the TrpB family. Tetramer of two alpha and two beta chains. Pyridoxal 5'-phosphate is required as a cofactor.

It carries out the reaction (1S,2R)-1-C-(indol-3-yl)glycerol 3-phosphate + L-serine = D-glyceraldehyde 3-phosphate + L-tryptophan + H2O. The protein operates within amino-acid biosynthesis; L-tryptophan biosynthesis; L-tryptophan from chorismate: step 5/5. Functionally, the beta subunit is responsible for the synthesis of L-tryptophan from indole and L-serine. The sequence is that of Tryptophan synthase beta chain from Streptococcus pneumoniae (strain P1031).